We begin with the raw amino-acid sequence, 440 residues long: UDP-N-acetylmuramoylalanine--D-glutamate ligase (440 aa).

Position 115–121 (115–121) interacts with ATP; it reads GSNGKST.

This sequence belongs to the MurCDEF family.

It localises to the cytoplasm. It carries out the reaction UDP-N-acetyl-alpha-D-muramoyl-L-alanine + D-glutamate + ATP = UDP-N-acetyl-alpha-D-muramoyl-L-alanyl-D-glutamate + ADP + phosphate + H(+). The protein operates within cell wall biogenesis; peptidoglycan biosynthesis. Its function is as follows. Cell wall formation. Catalyzes the addition of glutamate to the nucleotide precursor UDP-N-acetylmuramoyl-L-alanine (UMA). This is UDP-N-acetylmuramoylalanine--D-glutamate ligase from Aliivibrio fischeri (strain ATCC 700601 / ES114) (Vibrio fischeri).